The following is a 490-amino-acid chain: Betaine aldehyde dehydrogenase (490 aa).

Thr26, Ile27, and Asp93 together coordinate K(+). Residue 150-152 (GAW) coordinates NAD(+). The Charge relay system role is filled by Lys162. NAD(+) is bound at residue 176-179 (KPSE). Val180 contributes to the K(+) binding site. NAD(+) is bound at residue 230–233 (GVAS). Leu246 is a K(+) binding site. Glu252 functions as the Proton acceptor in the catalytic mechanism. NAD(+) contacts are provided by Gly254, Cys286, and Glu387. Cys286 functions as the Nucleophile in the catalytic mechanism. Residue Cys286 is modified to Cysteine sulfenic acid (-SOH). The K(+) site is built by Lys457 and Gly460. The active-site Charge relay system is Glu464.

Belongs to the aldehyde dehydrogenase family. In terms of assembly, dimer of dimers. Requires K(+) as cofactor.

The catalysed reaction is betaine aldehyde + NAD(+) + H2O = glycine betaine + NADH + 2 H(+). It participates in amine and polyamine biosynthesis; betaine biosynthesis via choline pathway; betaine from betaine aldehyde: step 1/1. Involved in the biosynthesis of the osmoprotectant glycine betaine. Catalyzes the irreversible oxidation of betaine aldehyde to the corresponding acid. In Escherichia coli O9:H4 (strain HS), this protein is Betaine aldehyde dehydrogenase.